Consider the following 101-residue polypeptide: NADH-quinone oxidoreductase subunit K (101 aa).

The next 3 membrane-spanning stretches (helical) occupy residues 4–24 (LAHYLVLGAVLFAISIVGIFL), 30–50 (IVLLMAIELMLLAVNMNFVAF), and 61–81 (VFVFFILTVAAAESAIGLAIL).

It belongs to the complex I subunit 4L family. NDH-1 is composed of 14 different subunits. Subunits NuoA, H, J, K, L, M, N constitute the membrane sector of the complex.

The protein localises to the cell inner membrane. It catalyses the reaction a quinone + NADH + 5 H(+)(in) = a quinol + NAD(+) + 4 H(+)(out). Functionally, NDH-1 shuttles electrons from NADH, via FMN and iron-sulfur (Fe-S) centers, to quinones in the respiratory chain. The immediate electron acceptor for the enzyme in this species is believed to be ubiquinone. Couples the redox reaction to proton translocation (for every two electrons transferred, four hydrogen ions are translocated across the cytoplasmic membrane), and thus conserves the redox energy in a proton gradient. This is NADH-quinone oxidoreductase subunit K from Ralstonia nicotianae (strain ATCC BAA-1114 / GMI1000) (Ralstonia solanacearum).